A 200-amino-acid polypeptide reads, in one-letter code: Ribonuclease HII (200 aa).

Residues 11-200 (QSIAGVDEVG…VRRALISLTG (190 aa)) form the RNase H type-2 domain. A divalent metal cation contacts are provided by aspartate 17, glutamate 18, and aspartate 109.

It belongs to the RNase HII family. Requires Mn(2+) as cofactor. The cofactor is Mg(2+).

It is found in the cytoplasm. The catalysed reaction is Endonucleolytic cleavage to 5'-phosphomonoester.. Its function is as follows. Endonuclease that specifically degrades the RNA of RNA-DNA hybrids. This is Ribonuclease HII from Hamiltonella defensa subsp. Acyrthosiphon pisum (strain 5AT).